We begin with the raw amino-acid sequence, 128 residues long: 3-aminoacrylate deaminase RutC (128 aa).

The protein belongs to the RutC family.

The catalysed reaction is (Z)-3-aminoacrylate + H2O + H(+) = 3-oxopropanoate + NH4(+). Involved in pyrimidine catabolism. Catalyzes the deamination of 3-aminoacrylate to malonic semialdehyde, a reaction that can also occur spontaneously. RutC may facilitate the reaction and modulate the metabolic fitness, rather than catalyzing essential functions. This chain is 3-aminoacrylate deaminase RutC, found in Agrobacterium fabrum (strain C58 / ATCC 33970) (Agrobacterium tumefaciens (strain C58)).